The following is an 870-amino-acid chain: Serine protease DegP homolog (870 aa).

Residues 1–29 form the signal peptide; the sequence is MDIIFCTPTYCKIMLMIIMLISLRTRCDT. The interval 128–151 is disordered; sequence KNPLNDNFKNPKLRKHSPNNKKNK. A compositionally biased stretch (basic residues) spans 138–151; that stretch reads PKLRKHSPNNKKNK. Residues His328, Asp359, and Ser437 each act as charge relay system in the active site.

The protein belongs to the peptidase S1C family. Oligomer; may form trimers or hexamers. Forms a complex at least composed of DegP, ENO and HSP70.

Its subcellular location is the cytoplasm. It localises to the parasitophorous vacuole. The protein resides in the host cell membrane. The protein localises to the host cytoplasm. Serine protease which also acts as a protein chaperone. Plays a role in the parasite development in host erythrocytes possibly by protecting it against thermal and oxidative stresses. This Plasmodium falciparum (isolate 3D7) protein is Serine protease DegP homolog.